Consider the following 453-residue polypeptide: uncharacterized protein (453 aa).

Residues 1–23 (MFLLQRFFIYGLFLACFYTTVFG) form the signal peptide. Residues 24–137 (EKHFEAEEYR…EKQFSYSSGT (114 aa)) lie on the Lumenal side of the membrane. Residues 138 to 158 (NGILATFLTAIPPNIFILLVP) form a helical membrane-spanning segment. At 159-165 (KSFDTSM) the chain is on the cytoplasmic side. Residues 166-186 (LNLFVAVSAGSLLGDVFLQLL) traverse the membrane as a helical segment. At 187–194 (PTVYSTNG) the chain is on the lumenal side. Residues 195-215 (GDFPASSVYSILIGALVFFLM) form a helical membrane-spanning segment. The Cytoplasmic segment spans residues 216-358 (DKGIRILIHE…LRNGYTKSQV (143 aa)). Over residues 229-238 (SLSKPKKDGE) the composition is skewed to basic and acidic residues. Positions 229–278 (SLSKPKKDGEETSSVNKPSASSTQTDVKGVEGLRKRNVKDDQNSKGHEPD) are disordered. A compositionally biased stretch (polar residues) spans 240-254 (TSSVNKPSASSTQTD). The segment covering 256–278 (KGVEGLRKRNVKDDQNSKGHEPD) has biased composition (basic and acidic residues). A helical transmembrane segment spans residues 359-379 (LVLQMITMVTGLLGAIVATYI). The Lumenal segment spans residues 380 to 399 (YTASSSSSPYGSFLLQLEDK). A helical transmembrane segment spans residues 400-420 (LLPFTAGGFLYIAYLGVFPEL). Residues 421–432 (LEINLSKGKLGN) are Cytoplasmic-facing. Residues 433–453 (MIYTALYMMFIVGGFSFLYYV) traverse the membrane as a helical segment.

Belongs to the ZIP transporter (TC 2.A.5) family. KE4/Catsup subfamily.

Its subcellular location is the endoplasmic reticulum membrane. This is an uncharacterized protein from Schizosaccharomyces pombe (strain 972 / ATCC 24843) (Fission yeast).